The sequence spans 306 residues: Methionyl-tRNA formyltransferase (306 aa).

110 to 113 (SLLP) contacts (6S)-5,6,7,8-tetrahydrofolate.

It belongs to the Fmt family.

It carries out the reaction L-methionyl-tRNA(fMet) + (6R)-10-formyltetrahydrofolate = N-formyl-L-methionyl-tRNA(fMet) + (6S)-5,6,7,8-tetrahydrofolate + H(+). Its function is as follows. Attaches a formyl group to the free amino group of methionyl-tRNA(fMet). The formyl group appears to play a dual role in the initiator identity of N-formylmethionyl-tRNA by promoting its recognition by IF2 and preventing the misappropriation of this tRNA by the elongation apparatus. This is Methionyl-tRNA formyltransferase from Brucella suis biovar 1 (strain 1330).